We begin with the raw amino-acid sequence, 273 residues long: Dermonecrotic toxin SdSicTox-betaIIB1bxi (273 aa).

The active site involves H4. Residues E24 and D26 each contribute to the Mg(2+) site. Residue H40 is the Nucleophile of the active site. 2 disulfides stabilise this stretch: C44/C50 and C46/C189. A Mg(2+)-binding site is contributed by D84.

This sequence belongs to the arthropod phospholipase D family. Class II subfamily. Mg(2+) is required as a cofactor. In terms of tissue distribution, expressed by the venom gland.

The protein localises to the secreted. It carries out the reaction an N-(acyl)-sphingosylphosphocholine = an N-(acyl)-sphingosyl-1,3-cyclic phosphate + choline. The enzyme catalyses an N-(acyl)-sphingosylphosphoethanolamine = an N-(acyl)-sphingosyl-1,3-cyclic phosphate + ethanolamine. The catalysed reaction is a 1-acyl-sn-glycero-3-phosphocholine = a 1-acyl-sn-glycero-2,3-cyclic phosphate + choline. It catalyses the reaction a 1-acyl-sn-glycero-3-phosphoethanolamine = a 1-acyl-sn-glycero-2,3-cyclic phosphate + ethanolamine. In terms of biological role, dermonecrotic toxins cleave the phosphodiester linkage between the phosphate and headgroup of certain phospholipids (sphingolipid and lysolipid substrates), forming an alcohol (often choline) and a cyclic phosphate. This toxin acts on sphingomyelin (SM). It may also act on ceramide phosphoethanolamine (CPE), lysophosphatidylcholine (LPC) and lysophosphatidylethanolamine (LPE), but not on lysophosphatidylserine (LPS), and lysophosphatidylglycerol (LPG). It acts by transphosphatidylation, releasing exclusively cyclic phosphate products as second products. Induces dermonecrosis, hemolysis, increased vascular permeability, edema, inflammatory response, and platelet aggregation. The polypeptide is Dermonecrotic toxin SdSicTox-betaIIB1bxi (Sicarius cf. damarensis (strain GJB-2008) (Six-eyed sand spider)).